Here is a 100-residue protein sequence, read N- to C-terminus: Urease subunit gamma (100 aa).

This sequence belongs to the urease gamma subunit family. Heterotrimer of UreA (gamma), UreB (beta) and UreC (alpha) subunits. Three heterotrimers associate to form the active enzyme.

The protein resides in the cytoplasm. It catalyses the reaction urea + 2 H2O + H(+) = hydrogencarbonate + 2 NH4(+). It participates in nitrogen metabolism; urea degradation; CO(2) and NH(3) from urea (urease route): step 1/1. In Staphylococcus xylosus, this protein is Urease subunit gamma.